Consider the following 297-residue polypeptide: ClpXP adapter protein SpxH (297 aa).

The protein belongs to the SpxH family. In terms of assembly, interacts with Spx.

It localises to the cytoplasm. Adapter protein required for efficient degradation of Spx by ClpXP under non-stress conditions. Interaction with Spx stabilizes Spx and exposes the C-terminus of Spx for recognition and proteolysis by ClpXP. This chain is ClpXP adapter protein SpxH, found in Bacillus cereus (strain ATCC 14579 / DSM 31 / CCUG 7414 / JCM 2152 / NBRC 15305 / NCIMB 9373 / NCTC 2599 / NRRL B-3711).